A 374-amino-acid polypeptide reads, in one-letter code: MDSPCLVALLVFSFVIGSCFSDNPIDSCWRGDSNWAQNRMKLADCAVGFGSSTMGGKGGDLYTVTNSDDDPVNPAPGTLRYGATRDRPLWIIFSGNMNIKLKMPMYIAGYKTFDGRGAQVYIGNGGPCVFIKRVSNVIIHGLYLYGCSTSVLGNVLINESFGVEPVHPQDGDALTLRTATNIWIDHNSFSNSSDGLVDVTLTSTGVTISNNLFFNHHKVMLLGHDDAYSDDKSMKVTVAFNQFGPNCGQRMPRARYGLVHVANNNYDPWTIYAIGGSSNPTILSEGNSFTAPNESYKKQVTIRIGCKTSSSCSNWVWQSTQDVFYNGAYFVSSGKYEGGNIYTKKEAFNVENGNATPQLTKNAGVLTCSLSKRC.

Positions 1–21 (MDSPCLVALLVFSFVIGSCFS) are cleaved as a signal peptide. 2 disulfides stabilise this stretch: Cys28–Cys45 and Cys128–Cys147. The N-linked (GlcNAc...) asparagine glycan is linked to Asn158. Asp170 serves as a coordination point for Ca(2+). A glycan (N-linked (GlcNAc...) (complex) asparagine) is linked at Asn191. Ca(2+) contacts are provided by Asp194 and Asp198. Arg250 is an active-site residue. Asn293 carries N-linked (GlcNAc...) asparagine glycosylation. Cys306 and Cys312 are disulfide-bonded. Asn354 carries an N-linked (GlcNAc...) (complex) asparagine glycan.

The protein belongs to the polysaccharide lyase 1 family. Amb a subfamily. Ca(2+) is required as a cofactor. N-glycosylated; contains fucose and xylose.

It catalyses the reaction Eliminative cleavage of (1-&gt;4)-alpha-D-galacturonan to give oligosaccharides with 4-deoxy-alpha-D-galact-4-enuronosyl groups at their non-reducing ends.. Its pathway is glycan metabolism; pectin degradation; 2-dehydro-3-deoxy-D-gluconate from pectin: step 2/5. In terms of biological role, has pectate lyase activity. This chain is Pectate lyase 1, found in Cryptomeria japonica (Japanese cedar).